We begin with the raw amino-acid sequence, 604 residues long: Sulfite reductase [NADPH] flavoprotein alpha-component (604 aa).

A Flavodoxin-like domain is found at 66–204 (VTVLSASQTG…SANAWTDNIA (139 aa)). Residues 72 to 77 (SQTGNA), 119 to 122 (STQG), and 155 to 164 (LGDSSYPNFC) each bind FMN. Positions 239–453 (AAPFPAALLA…VERNDGFRLP (215 aa)) constitute an FAD-binding FR-type domain. Residues Thr327, Gln361, 391 to 394 (RLYS), 409 to 411 (TVG), and 424 to 427 (GGAS) contribute to the FAD site. Residues 524–525 (SR), 530–534 (KIYVQ), and Asp566 contribute to the NADP(+) site. Tyr604 contributes to the FAD binding site.

Belongs to the NADPH-dependent sulphite reductase flavoprotein subunit CysJ family. The protein in the N-terminal section; belongs to the flavodoxin family. This sequence in the C-terminal section; belongs to the flavoprotein pyridine nucleotide cytochrome reductase family. Alpha(8)-beta(8). The alpha component is a flavoprotein, the beta component is a hemoprotein. It depends on FAD as a cofactor. Requires FMN as cofactor.

It catalyses the reaction hydrogen sulfide + 3 NADP(+) + 3 H2O = sulfite + 3 NADPH + 4 H(+). The protein operates within sulfur metabolism; hydrogen sulfide biosynthesis; hydrogen sulfide from sulfite (NADPH route): step 1/1. In terms of biological role, component of the sulfite reductase complex that catalyzes the 6-electron reduction of sulfite to sulfide. This is one of several activities required for the biosynthesis of L-cysteine from sulfate. The flavoprotein component catalyzes the electron flow from NADPH -&gt; FAD -&gt; FMN to the hemoprotein component. The chain is Sulfite reductase [NADPH] flavoprotein alpha-component from Neisseria meningitidis serogroup B (strain ATCC BAA-335 / MC58).